Reading from the N-terminus, the 318-residue chain is MFLMNILCLIIPILLAMAFLTLVERKILGYMQLRKGPNVVGPYGLLQPIADAIKLFIKEPLRPLTSSKTMFILAPTLAFSLALSMWIPMPMPHPLVNLNLGVLFILALSSLAVYSILWSGWASNSKYALIGALRAVAQTISYEVTLAIILLSIMMLNGSFTLSTLTTTQEHLWLIFPLWPLAMMWFISTLAETNRAPFDLTEGESELVSGFNVEYAAGPFALFFMAEYTNIIMMNALTTILFLGALHNPLFPELFTVNFVTKTLLLTVTFLWVRASYPRFRYDQLMHLLWKSFLPLTLALCMLHVSTPTMLAGIPPHM.

Helical transmembrane passes span 2–22 (FLMN…FLTL), 70–90 (MFIL…IPMP), 100–120 (LGVL…LWSG), 136–156 (VAQT…IMML), 171–191 (HLWL…STLA), 231–251 (IIMM…NPLF), 253–273 (ELFT…FLWV), and 294–314 (LPLT…LAGI).

The protein belongs to the complex I subunit 1 family.

It localises to the mitochondrion inner membrane. The catalysed reaction is a ubiquinone + NADH + 5 H(+)(in) = a ubiquinol + NAD(+) + 4 H(+)(out). Its function is as follows. Core subunit of the mitochondrial membrane respiratory chain NADH dehydrogenase (Complex I) that is believed to belong to the minimal assembly required for catalysis. Complex I functions in the transfer of electrons from NADH to the respiratory chain. The immediate electron acceptor for the enzyme is believed to be ubiquinone. The protein is NADH-ubiquinone oxidoreductase chain 1 (MT-ND1) of Priodontes maximus (Giant armadillo).